Consider the following 461-residue polypeptide: Argininosuccinate lyase (461 aa).

Belongs to the lyase 1 family. Argininosuccinate lyase subfamily.

The protein localises to the cytoplasm. The catalysed reaction is 2-(N(omega)-L-arginino)succinate = fumarate + L-arginine. It participates in amino-acid biosynthesis; L-arginine biosynthesis; L-arginine from L-ornithine and carbamoyl phosphate: step 3/3. In Dehalococcoides mccartyi (strain CBDB1), this protein is Argininosuccinate lyase.